A 286-amino-acid chain; its full sequence is Bifunctional protein FolD (286 aa).

NADP(+) contacts are provided by residues 164–166 (GAS), Ile189, and Ile230.

This sequence belongs to the tetrahydrofolate dehydrogenase/cyclohydrolase family. As to quaternary structure, homodimer.

The enzyme catalyses (6R)-5,10-methylene-5,6,7,8-tetrahydrofolate + NADP(+) = (6R)-5,10-methenyltetrahydrofolate + NADPH. It carries out the reaction (6R)-5,10-methenyltetrahydrofolate + H2O = (6R)-10-formyltetrahydrofolate + H(+). It functions in the pathway one-carbon metabolism; tetrahydrofolate interconversion. In terms of biological role, catalyzes the oxidation of 5,10-methylenetetrahydrofolate to 5,10-methenyltetrahydrofolate and then the hydrolysis of 5,10-methenyltetrahydrofolate to 10-formyltetrahydrofolate. This chain is Bifunctional protein FolD, found in Wolinella succinogenes (strain ATCC 29543 / DSM 1740 / CCUG 13145 / JCM 31913 / LMG 7466 / NCTC 11488 / FDC 602W) (Vibrio succinogenes).